A 164-amino-acid chain; its full sequence is Thiol peroxidase (164 aa).

One can recognise a Thioredoxin domain in the interval 16–162 (LQVGEIAHDF…YDAAIEAVKV (147 aa)). Cys-58 serves as the catalytic Cysteine sulfenic acid (-SOH) intermediate. Residues Cys-58 and Cys-92 are joined by a disulfide bond.

The protein belongs to the peroxiredoxin family. Tpx subfamily. As to quaternary structure, homodimer.

It carries out the reaction a hydroperoxide + [thioredoxin]-dithiol = an alcohol + [thioredoxin]-disulfide + H2O. Thiol-specific peroxidase that catalyzes the reduction of hydrogen peroxide and organic hydroperoxides to water and alcohols, respectively. Plays a role in cell protection against oxidative stress by detoxifying peroxides. This chain is Thiol peroxidase, found in Streptococcus parasanguinis.